A 580-amino-acid polypeptide reads, in one-letter code: Type 3 secretion system translocon protein SctE (580 aa).

Transmembrane regions (helical) follow at residues Ile-313–Ser-333 and Ile-399–Val-419.

It belongs to the SctE/SipB/YopB family. As to quaternary structure, the core secretion machinery of the T3SS is composed of approximately 20 different proteins, including cytoplasmic components, a base, an export apparatus and a needle. This subunit is involved in the formation of a pore, called the translocon, in host membrane.

It is found in the secreted. The protein resides in the host membrane. In terms of biological role, component of the type III secretion system (T3SS), also called injectisome, which is used to inject bacterial effector proteins into eukaryotic host cells. IpaB/SctE and IpaC/SctB are inserted into the host membrane where they form a pore and allow the translocation of effector proteins into the cytosol of target cells. This chain is Type 3 secretion system translocon protein SctE, found in Shigella dysenteriae.